The primary structure comprises 505 residues: MSEQHAQGADAVVDLNNELKTRREKLANLREQGIAFPNDFRRDHTSDQLHAEFDGKENEELEALNIEVAVAGRMMTRRIMGKASFVTLQDVGGRIQLYVARDDLPEGVYNEQFKKWDLGDILGAKGKLFKTKTGELSIHCTELRLLTKALRPLPDKFHGLQDQEARYRQRYLDLISNDESRNTFKVRSQILSGIRQFMVNRGFMEVETPMMQVIPGGAAARPFITHHNALDLDMYLRIAPELYLKRLVVGGFERVFEINRNFRNEGISVRHNPEFTMMELYMAYADYKDLIELTESLFRTLAQDILGKTEVTYGDVTLDFGKPFEKLTMREAIKKYRPETDMADLDNFDSAKAIVESIGIHVEKSWGLGRIVTEIFEEVAEAHLIQPTFITEYPAEVSPLARRNDVNPEITDRFEFFIGGREIGNGFSELNDAEDQAQRFLDQVAAKDAGDDEAMFYDEDYVTALEHGLPPTAGLGIGIDRMVMLFTNSHTIRDVILFPAMRPVK.

Mg(2+) is bound by residues Glu415 and Glu422.

The protein belongs to the class-II aminoacyl-tRNA synthetase family. As to quaternary structure, homodimer. It depends on Mg(2+) as a cofactor.

The protein localises to the cytoplasm. The enzyme catalyses tRNA(Lys) + L-lysine + ATP = L-lysyl-tRNA(Lys) + AMP + diphosphate. The protein is Lysine--tRNA ligase of Escherichia coli O157:H7.